The chain runs to 258 residues: Chymotrypsin-like elastase family member 1 (258 aa).

An N-terminal signal peptide occupies residues 1–8 (MLVLYGHS). A propeptide spans 9-18 (TQDLPETNAR) (activation peptide). The region spanning 19 to 256 (VVGGTEAGRN…YISWINNVIA (238 aa)) is the Peptidase S1 domain. An intrachain disulfide couples cysteine 48 to cysteine 64. Histidine 63 serves as the catalytic Charge relay system. 4 residues coordinate Ca(2+): aspartate 77, asparagine 79, glutamine 82, and glutamate 87. The N-linked (GlcNAc...) asparagine glycan is linked to asparagine 79. Aspartate 111 (charge relay system) is an active-site residue. Intrachain disulfides connect cysteine 145–cysteine 212, cysteine 176–cysteine 192, and cysteine 202–cysteine 232. Catalysis depends on serine 206, which acts as the Charge relay system. Asparagine 233 carries an N-linked (GlcNAc...) asparagine glycan.

The protein belongs to the peptidase S1 family. Elastase subfamily. Ca(2+) serves as cofactor. In terms of tissue distribution, basal layers of epidermis (at protein level). Not expressed in the pancreas.

The protein resides in the secreted. It carries out the reaction Hydrolysis of proteins, including elastin. Preferential cleavage: Ala-|-Xaa.. In terms of biological role, serine proteases that hydrolyze many proteins in addition to elastin. In Homo sapiens (Human), this protein is Chymotrypsin-like elastase family member 1 (CELA1).